The chain runs to 574 residues: uncharacterized protein (574 aa).

Residues 297 to 327 form a disordered region; sequence STASKSKKRRKDEVSGAQRNSSPLPQDAVSS. Positions 313–327 are enriched in polar residues; the sequence is AQRNSSPLPQDAVSS.

This is an uncharacterized protein from Macaca fascicularis (Crab-eating macaque).